A 1489-amino-acid chain; its full sequence is Chromosome partition protein MukB (1489 aa).

34–41 (GGNGAGKS) is an ATP binding site. Coiled-coil stretches lie at residues 326–418 (LEAD…QYNQ), 444–472 (LETFQAKEQEATEKLLSLEQKMSVAQTAH), 509–602 (RHLA…QRAP), 780–805 (RAARENRIESLHAEREGLSERFATLS), 835–919 (EAEI…GNQL), 977–1116 (EMLS…AKAG), and 1209–1266 (VEAI…QNVS). A flexible hinge region spans residues 666-783 (PGGSEDSRLN…TVPIFGRAAR (118 aa)).

The protein belongs to the SMC family. MukB subfamily. Homodimerization via its hinge domain. Binds to DNA via its C-terminal region. Interacts, and probably forms a ternary complex, with MukE and MukF via its C-terminal region. The complex formation is stimulated by calcium or magnesium. Interacts with tubulin-related protein FtsZ.

Its subcellular location is the cytoplasm. The protein localises to the nucleoid. Functionally, plays a central role in chromosome condensation, segregation and cell cycle progression. Functions as a homodimer, which is essential for chromosome partition. Involved in negative DNA supercoiling in vivo, and by this means organize and compact chromosomes. May achieve or facilitate chromosome segregation by condensation DNA from both sides of a centrally located replisome during cell division. The polypeptide is Chromosome partition protein MukB (Citrobacter koseri (strain ATCC BAA-895 / CDC 4225-83 / SGSC4696)).